Consider the following 549-residue polypeptide: MEFAELIKTPRVDNVVLHRPFYPAVEGTLCLTGHHLILSSRQDNTEELWLLHSNIDAIDKRFVGSLGTIIIKCKDFRIIQLDIPGMEECLNIASSIEALSTLDSITLMYPFFYRPMFEVIEDGWHSFLPEQEFELYSSATSEWRLSYVNKEFAVCPSYPPIVTVPKSIDDEALRKVATFRHGGRFPVLSYYHKKNGMVIMRSGQPLTGTNGRRCKEDEKLINATLRAGKRGYIIDTRSLNVAQQTRAKGGGFEQEAHYPQWRRIHKSIERYHILQESLIKLVEACNDQTHNMDRWLSKLEASNWLTHIKEILTTACLAAQCIDREGASILIHGTEGTDSTLQVTSLAQIILEPRSRTIRGFEALIEREWLQAGHPFQQRCAQSAYCNTKQKWEAPVFLLFLDCVWQILRQFPCSFEFNENFLIMLFEHAYASQFGTFLGNNESERCKLKLQQKTMSLWSWVNQPSELSKFTNPLFEANNLVIWPSVAPQSLPLWEGIFLRWNRSSKYLDEAYEEMVNIIEYNKELQAKVNILRRQLAELETEDGMQESP.

An N-acetylmethionine modification is found at Met1. A GRAM domain is found at 4 to 99 (AELIKTPRVD…LNIASSIEAL (96 aa)). Positions 123–498 (GWHSFLPEQE…QSLPLWEGIF (376 aa)) constitute a Myotubularin phosphatase domain. Positions 508–542 (LDEAYEEMVNIIEYNKELQAKVNILRRQLAELETE) form a coiled coil. At Ser548 the chain carries Phosphoserine.

It belongs to the protein-tyrosine phosphatase family. Non-receptor class myotubularin subfamily. As to quaternary structure, homodimer. Heterodimer (via C-terminus) with lipid phosphatase MTMR6 (via C-terminus). Heterodimer (via coiled coil domain) with lipid phosphatase MTMR7 (via C-terminus). Heterodimer with lipid phosphatase MTMR8. Expressed in many tissues.

The protein localises to the cytoplasm. It localises to the cell projection. It is found in the ruffle membrane. The protein resides in the perinuclear region. Its subcellular location is the endoplasmic reticulum. Functionally, acts as an adapter for myotubularin-related phosphatases. Increases lipid phosphatase MTMR6 catalytic activity, specifically towards phosphatidylinositol 3,5-bisphosphate and MTMR6 binding affinity for phosphorylated phosphatidylinositols. Positively regulates lipid phosphatase MTMR7 catalytic activity. Increases MTMR8 catalytic activity towards phosphatidylinositol 3-phosphate. The formation of the MTMR6-MTMR9 complex, stabilizes both MTMR6 and MTMR9 protein levels. Stabilizes MTMR8 protein levels. Plays a role in the late stages of macropinocytosis possibly by regulating MTMR6-mediated dephosphorylation of phosphatidylinositol 3-phosphate in membrane ruffles. Negatively regulates autophagy, in part via its association with MTMR8. Negatively regulates DNA damage-induced apoptosis, in part via its association with MTMR6. Does not bind mono-, di- and tri-phosphorylated phosphatidylinositols, phosphatidic acid and phosphatidylserine. The chain is Myotubularin-related protein 9 (MTMR9) from Homo sapiens (Human).